A 144-amino-acid chain; its full sequence is Subtilase-type protease inhibitor (144 aa).

The first 35 residues, 1 to 35 (MRNTARWAATLGLTATAVCGPLAGASLASPATAPA), serve as a signal peptide directing secretion. 2 disulfides stabilise this stretch: Cys-66-Cys-81 and Cys-102-Cys-132.

Belongs to the protease inhibitor I16 (SSI) family. Homodimer.

Its subcellular location is the secreted. Strong inhibitory activity toward subtilisin BPN' and, to a lesser extent, toward trypsin. The chain is Subtilase-type protease inhibitor (sti1) from Streptomyces coelicolor (strain ATCC BAA-471 / A3(2) / M145).